A 127-amino-acid chain; its full sequence is MSNVPADLRYAKSHEWLKLEADGTATIGITDYAQSSLGDITYVQLPKVGAALKAGETFGVVESVKAASDLYAPAGGTVVAVNAELDSAPDAVNRAPYAEGWMLKLKLANPADANALLNAADYGKLLG.

A Lipoyl-binding domain is found at 24–106; it reads TATIGITDYA…YAEGWMLKLK (83 aa). The residue at position 65 (Lys-65) is an N6-lipoyllysine.

Belongs to the GcvH family. As to quaternary structure, the glycine cleavage system is composed of four proteins: P, T, L and H. Requires (R)-lipoate as cofactor.

In terms of biological role, the glycine cleavage system catalyzes the degradation of glycine. The H protein shuttles the methylamine group of glycine from the P protein to the T protein. The sequence is that of Glycine cleavage system H protein from Opitutus terrae (strain DSM 11246 / JCM 15787 / PB90-1).